A 326-amino-acid chain; its full sequence is Probable cell division protein WhiA (326 aa).

The segment at residues Ser275–Arg308 is a DNA-binding region (H-T-H motif).

This sequence belongs to the WhiA family.

In terms of biological role, involved in cell division and chromosome segregation. This chain is Probable cell division protein WhiA, found in Salinispora arenicola (strain CNS-205).